The chain runs to 170 residues: Lipoprotein signal peptidase (170 aa).

The next 4 membrane-spanning stretches (helical) occupy residues 11–31 (LSWL…KFYF), 41–61 (IVVI…AAFS), 69–89 (WQRW…VVWL), and 95–115 (NETW…GNLY). Active-site residues include D125 and D144. Residues 136 to 156 (YFPAFNFADSAITVGAVMLAL) traverse the membrane as a helical segment.

The protein belongs to the peptidase A8 family.

It localises to the cell inner membrane. The enzyme catalyses Release of signal peptides from bacterial membrane prolipoproteins. Hydrolyzes -Xaa-Yaa-Zaa-|-(S,diacylglyceryl)Cys-, in which Xaa is hydrophobic (preferably Leu), and Yaa (Ala or Ser) and Zaa (Gly or Ala) have small, neutral side chains.. It participates in protein modification; lipoprotein biosynthesis (signal peptide cleavage). Its function is as follows. This protein specifically catalyzes the removal of signal peptides from prolipoproteins. The polypeptide is Lipoprotein signal peptidase (Pseudomonas fluorescens (strain Pf0-1)).